We begin with the raw amino-acid sequence, 740 residues long: Protein SIEVE ELEMENT OCCLUSION B (740 aa).

Positions 1 to 23 (MESLIKSQHAQQLAGHKNTTGKT) are enriched in polar residues. The disordered stretch occupies residues 1-27 (MESLIKSQHAQQLAGHKNTTGKTPSME).

Can form homodimer. As to expression, expressed in phloem sieve elements.

Functionally, scaffold protein required to form the phloem filament matrix in sieve elements. The sequence is that of Protein SIEVE ELEMENT OCCLUSION B from Arabidopsis thaliana (Mouse-ear cress).